We begin with the raw amino-acid sequence, 1320 residues long: Phosphoribosylformylglycinamidine synthase (1320 aa).

ATP-binding positions include 310–321 (GAATGSGGEIRD) and Ala-686. Asp-687, Glu-726, Asn-730, and Asp-894 together coordinate Mg(2+). An ATP-binding site is contributed by Ser-896. The 254-residue stretch at 1067–1320 (VAILREQGVN…MFRNARAFIG (254 aa)) folds into the Glutamine amidotransferase type-1 domain. Cys-1160 (nucleophile) is an active-site residue. Catalysis depends on residues His-1285 and Glu-1287.

In the N-terminal section; belongs to the FGAMS family. In terms of assembly, monomer.

The protein resides in the cytoplasm. The enzyme catalyses N(2)-formyl-N(1)-(5-phospho-beta-D-ribosyl)glycinamide + L-glutamine + ATP + H2O = 2-formamido-N(1)-(5-O-phospho-beta-D-ribosyl)acetamidine + L-glutamate + ADP + phosphate + H(+). The protein operates within purine metabolism; IMP biosynthesis via de novo pathway; 5-amino-1-(5-phospho-D-ribosyl)imidazole from N(2)-formyl-N(1)-(5-phospho-D-ribosyl)glycinamide: step 1/2. Functionally, phosphoribosylformylglycinamidine synthase involved in the purines biosynthetic pathway. Catalyzes the ATP-dependent conversion of formylglycinamide ribonucleotide (FGAR) and glutamine to yield formylglycinamidine ribonucleotide (FGAM) and glutamate. In Colwellia psychrerythraea (strain 34H / ATCC BAA-681) (Vibrio psychroerythus), this protein is Phosphoribosylformylglycinamidine synthase.